A 189-amino-acid polypeptide reads, in one-letter code: Potassium-transporting ATPase KdpC subunit (189 aa).

A helical membrane pass occupies residues 8–28; the sequence is LVMLILLTLITGIAYPLLTTG.

It belongs to the KdpC family. In terms of assembly, the system is composed of three essential subunits: KdpA, KdpB and KdpC.

The protein resides in the cell inner membrane. Functionally, part of the high-affinity ATP-driven potassium transport (or Kdp) system, which catalyzes the hydrolysis of ATP coupled with the electrogenic transport of potassium into the cytoplasm. This subunit acts as a catalytic chaperone that increases the ATP-binding affinity of the ATP-hydrolyzing subunit KdpB by the formation of a transient KdpB/KdpC/ATP ternary complex. This Serratia proteamaculans (strain 568) protein is Potassium-transporting ATPase KdpC subunit.